A 90-amino-acid chain; its full sequence is Small ribosomal subunit protein bS20 (90 aa).

Positions 1 to 10 are enriched in polar residues; it reads MANHKSTQKS. The disordered stretch occupies residues 1–25; sequence MANHKSTQKSIRQDQKRNLINKSRK.

This sequence belongs to the bacterial ribosomal protein bS20 family.

Its function is as follows. Binds directly to 16S ribosomal RNA. The polypeptide is Small ribosomal subunit protein bS20 (Orientia tsutsugamushi (strain Ikeda) (Rickettsia tsutsugamushi)).